Here is a 493-residue protein sequence, read N- to C-terminus: Hexokinase-like 1 protein (493 aa).

The region spanning Ala38–Ala488 is the Hexokinase domain. Residues Ser93–Val232 are hexokinase small subdomain. 3 residues coordinate ADP: Gly107, Thr108, and Asn109. Residues Thr198, Lys199, Asn233, and Asp234 each contribute to the D-glucose site. Residues Asn233 to Asp477 are hexokinase large subdomain. Thr257 serves as a coordination point for ADP. D-glucose contacts are provided by Asn260, Glu287, and Glu317. Ala442 provides a ligand contact to ADP.

The protein belongs to the hexokinase family.

It carries out the reaction a D-hexose + ATP = a D-hexose 6-phosphate + ADP + H(+). It catalyses the reaction D-fructose + ATP = D-fructose 6-phosphate + ADP + H(+). The catalysed reaction is D-glucose + ATP = D-glucose 6-phosphate + ADP + H(+). It participates in carbohydrate metabolism; hexose metabolism. The protein operates within carbohydrate degradation; glycolysis; D-glyceraldehyde 3-phosphate and glycerone phosphate from D-glucose: step 1/4. In terms of biological role, fructose and glucose phosphorylating enzyme. This is Hexokinase-like 1 protein from Arabidopsis thaliana (Mouse-ear cress).